Consider the following 1143-residue polypeptide: DNA-directed RNA polymerase subunit beta (1143 aa).

The protein belongs to the RNA polymerase beta chain family. In plastids the minimal PEP RNA polymerase catalytic core is composed of four subunits: alpha, beta, beta', and beta''. When a (nuclear-encoded) sigma factor is associated with the core the holoenzyme is formed, which can initiate transcription.

It is found in the plastid. The protein localises to the chloroplast. It carries out the reaction RNA(n) + a ribonucleoside 5'-triphosphate = RNA(n+1) + diphosphate. In terms of biological role, DNA-dependent RNA polymerase catalyzes the transcription of DNA into RNA using the four ribonucleoside triphosphates as substrates. This is DNA-directed RNA polymerase subunit beta from Porphyra purpurea (Red seaweed).